The chain runs to 192 residues: MRIIMATYTTSDFKPGLKFMQDGEPCVIVENEFVKPGKGQAFTRTRIRKLISGKVLDVNFKSGTSVEAADVMDLNLNYSYKDEDFWYFMHPETFEQYSADSKAVGDAEKWLLDQAECIITLWNGSPISVTPPNFVELEVVDTDPGLKGDTAGTGGKPATLSTGAVVKVPLFIQIGEVIKVDTRSGEYVSRVK.

Lysine 38 is modified (N6-(3,6-diaminohexanoyl)-5-hydroxylysine).

The protein belongs to the elongation factor P family. In terms of processing, may be beta-lysylated on the epsilon-amino group of Lys-38 by the combined action of EpmA and EpmB, and then hydroxylated on the C5 position of the same residue by EpmC (if this protein is present). Lysylation is critical for the stimulatory effect of EF-P on peptide-bond formation. The lysylation moiety may extend toward the peptidyltransferase center and stabilize the terminal 3-CCA end of the tRNA. Hydroxylation of the C5 position on Lys-38 may allow additional potential stabilizing hydrogen-bond interactions with the P-tRNA.

The protein resides in the cytoplasm. It participates in protein biosynthesis; polypeptide chain elongation. In terms of biological role, involved in peptide bond synthesis. Alleviates ribosome stalling that occurs when 3 or more consecutive Pro residues or the sequence PPG is present in a protein, possibly by augmenting the peptidyl transferase activity of the ribosome. Modification of Lys-38 is required for alleviation. The protein is Elongation factor P of Mannheimia succiniciproducens (strain KCTC 0769BP / MBEL55E).